We begin with the raw amino-acid sequence, 227 residues long: Large ribosomal subunit protein uL1 (227 aa).

The protein belongs to the universal ribosomal protein uL1 family. In terms of assembly, part of the 50S ribosomal subunit.

Binds directly to 23S rRNA. The L1 stalk is quite mobile in the ribosome, and is involved in E site tRNA release. In terms of biological role, protein L1 is also a translational repressor protein, it controls the translation of the L11 operon by binding to its mRNA. The sequence is that of Large ribosomal subunit protein uL1 from Tropheryma whipplei (strain TW08/27) (Whipple's bacillus).